The chain runs to 349 residues: Glycerol-3-phosphate dehydrogenase [NAD(+)], cytoplasmic (349 aa).

Position 10–15 (10–15 (GSGNWG)) interacts with NAD(+). Substrate is bound at residue lysine 120. Residue alanine 153 participates in NAD(+) binding. Serine 154 carries the phosphoserine modification. Lysine 204 serves as the catalytic Proton acceptor. Arginine 269 serves as a coordination point for NAD(+). Residue 269 to 270 (RN) participates in substrate binding. An N6-succinyllysine modification is found at lysine 289. NAD(+)-binding residues include lysine 296 and glutamine 298. Tyrosine 326 is modified (phosphotyrosine).

It belongs to the NAD-dependent glycerol-3-phosphate dehydrogenase family. In terms of assembly, homodimer.

Its subcellular location is the cytoplasm. The enzyme catalyses sn-glycerol 3-phosphate + NAD(+) = dihydroxyacetone phosphate + NADH + H(+). In terms of biological role, has glycerol-3-phosphate dehydrogenase activity. This Pongo abelii (Sumatran orangutan) protein is Glycerol-3-phosphate dehydrogenase [NAD(+)], cytoplasmic (GPD1).